An 883-amino-acid polypeptide reads, in one-letter code: AP-5 complex subunit beta-1 (883 aa).

Probably part of the adaptor protein complex 5 (AP-5).

As part of AP-5, a probable fifth adaptor protein complex, it may be involved in endosomal transport. This Xenopus tropicalis (Western clawed frog) protein is AP-5 complex subunit beta-1 (ap5b1).